The sequence spans 338 residues: Replication factor C small subunit (338 aa).

Residue 53–60 (GPPGVGKT) participates in ATP binding.

It belongs to the activator 1 small subunits family. RfcS subfamily. In terms of assembly, heteromultimer composed of small subunits (RfcS) and large subunits (RfcL).

In terms of biological role, part of the RFC clamp loader complex which loads the PCNA sliding clamp onto DNA. The chain is Replication factor C small subunit from Methanosarcina mazei (strain ATCC BAA-159 / DSM 3647 / Goe1 / Go1 / JCM 11833 / OCM 88) (Methanosarcina frisia).